The sequence spans 299 residues: 4-diphosphocytidyl-2-C-methyl-D-erythritol kinase (299 aa).

Residue lysine 16 is part of the active site. Residue 101 to 111 (PVAAGIGGGSA) coordinates ATP. The active site involves aspartate 143.

It belongs to the GHMP kinase family. IspE subfamily.

It catalyses the reaction 4-CDP-2-C-methyl-D-erythritol + ATP = 4-CDP-2-C-methyl-D-erythritol 2-phosphate + ADP + H(+). Its pathway is isoprenoid biosynthesis; isopentenyl diphosphate biosynthesis via DXP pathway; isopentenyl diphosphate from 1-deoxy-D-xylulose 5-phosphate: step 3/6. Catalyzes the phosphorylation of the position 2 hydroxy group of 4-diphosphocytidyl-2C-methyl-D-erythritol. The chain is 4-diphosphocytidyl-2-C-methyl-D-erythritol kinase from Rhodopseudomonas palustris (strain ATCC BAA-98 / CGA009).